The chain runs to 426 residues: D-tagatose-1,6-bisphosphate aldolase subunit KbaZ (426 aa).

Belongs to the GatZ/KbaZ family. KbaZ subfamily. In terms of assembly, forms a complex with KbaY.

It participates in carbohydrate metabolism; D-tagatose 6-phosphate degradation; D-glyceraldehyde 3-phosphate and glycerone phosphate from D-tagatose 6-phosphate: step 2/2. Its function is as follows. Component of the tagatose-1,6-bisphosphate aldolase KbaYZ that is required for full activity and stability of the Y subunit. Could have a chaperone-like function for the proper and stable folding of KbaY. When expressed alone, KbaZ does not show any aldolase activity. The chain is D-tagatose-1,6-bisphosphate aldolase subunit KbaZ from Escherichia coli O157:H7.